A 308-amino-acid polypeptide reads, in one-letter code: Olfactory receptor 8D1 (308 aa).

At 1 to 25 (MTMENYSMAAQFVLDGLTQQAELQL) the chain is on the extracellular side. Asn-5 carries N-linked (GlcNAc...) asparagine glycosylation. The helical transmembrane segment at 26-46 (PLFLLFLGIYVVTVVGNLGMI) threads the bilayer. Residues 47–54 (LLIAVSPL) are Cytoplasmic-facing. A helical transmembrane segment spans residues 55 to 75 (LHTPMYYFLSSLSFVDFCYSS). Topologically, residues 76-99 (VITPKMLVNFLGKKNTILYSECMV) are extracellular. Cys-97 and Cys-189 are joined by a disulfide. The chain crosses the membrane as a helical span at residues 100–120 (QLFFFVVFVVAEGYLLTAMAY). The Cytoplasmic segment spans residues 121–139 (DRYVAICSPLLYNAIMSSW). A helical membrane pass occupies residues 140-160 (VCSLLVLAAFFLGFLSALTHT). At 161–197 (SAMMKLSFCKSHIINHYFCDVLPLLNLSCSNTHLNEL) the chain is on the extracellular side. An N-linked (GlcNAc...) asparagine glycan is attached at Asn-186. Residues 198–217 (LLFIIAGFNTLVPTLAVAVS) form a helical membrane-spanning segment. Residues 218 to 237 (YAFILYSILHIRSSEGRSKA) are Cytoplasmic-facing. Residues 238–258 (FGTCSSHLMAVVIFFGSITFM) form a helical membrane-spanning segment. At 259–271 (YFKPPSSNSLDQE) the chain is on the extracellular side. The helical transmembrane segment at 272-292 (KVSSVFYTTVIPMLNPLIYSL) threads the bilayer. The Cytoplasmic portion of the chain corresponds to 293–308 (RNKDVKKALRKVLVGK).

It belongs to the G-protein coupled receptor 1 family. In terms of tissue distribution, expressed in the tongue.

The protein localises to the cell membrane. Its function is as follows. Odorant receptor (Potential). May be involved in taste perception. In Homo sapiens (Human), this protein is Olfactory receptor 8D1 (OR8D1).